The chain runs to 192 residues: Fe/S biogenesis protein NfuA (192 aa).

Positions 149 and 152 each coordinate [4Fe-4S] cluster.

This sequence belongs to the NfuA family. In terms of assembly, homodimer. [4Fe-4S] cluster is required as a cofactor.

In terms of biological role, involved in iron-sulfur cluster biogenesis. Binds a 4Fe-4S cluster, can transfer this cluster to apoproteins, and thereby intervenes in the maturation of Fe/S proteins. Could also act as a scaffold/chaperone for damaged Fe/S proteins. In Shewanella sediminis (strain HAW-EB3), this protein is Fe/S biogenesis protein NfuA.